Reading from the N-terminus, the 143-residue chain is UPF0201 protein Pcal_0593 (143 aa).

This sequence belongs to the UPF0201 family.

This chain is UPF0201 protein Pcal_0593, found in Pyrobaculum calidifontis (strain DSM 21063 / JCM 11548 / VA1).